Here is a 159-residue protein sequence, read N- to C-terminus: Transcriptional repressor NrdR (159 aa).

A zinc finger spans residues 3–34; it reads CPFCRHDDTQVVDSRVSEDGAAIRRRRRCSAC. One can recognise an ATP-cone domain in the interval 49–139; sequence PAVVKKDGSR…VYRRFEDVSE (91 aa).

It belongs to the NrdR family. It depends on Zn(2+) as a cofactor.

Its function is as follows. Negatively regulates transcription of bacterial ribonucleotide reductase nrd genes and operons by binding to NrdR-boxes. This chain is Transcriptional repressor NrdR, found in Burkholderia pseudomallei (strain 1106a).